A 311-amino-acid polypeptide reads, in one-letter code: Olfactory receptor 8G1 (311 aa).

Residues 1-25 (MSGENNSSVTEFILAGLSEQPELQL) are Extracellular-facing. N-linked (GlcNAc...) asparagine glycosylation is found at Asn5 and Asn6. A helical membrane pass occupies residues 26–46 (PLFLLFLGIYVVTVVGNLGMT). Topologically, residues 47–54 (TLIWLSSH) are cytoplasmic. A helical transmembrane segment spans residues 55-75 (LHTPMYYFLSSLSFIDFCHST). The Extracellular portion of the chain corresponds to 76–99 (VITPKMLVNFVTEKNIISYPECMT). A disulfide bond links Cys97 and Cys189. A helical membrane pass occupies residues 100 to 120 (QLYFFLVFAIAECHMLAAMAY). The Cytoplasmic segment spans residues 121 to 139 (DRYMAICSPLLYSVIISNK). The helical transmembrane segment at 140-160 (ACFSLILGVYIIGLVCASVHT) threads the bilayer. The Extracellular portion of the chain corresponds to 161-197 (GCMFRVQFCKFDLINHYFCDLLPLLKLSCSSIYVNKL). The helical transmembrane segment at 198 to 217 (LILCVGAFNILVPSLTILCS) threads the bilayer. Over 218 to 237 (YIFIIASILHIRSTEGRSKA) the chain is Cytoplasmic. The helical transmembrane segment at 238–258 (FSTCSSHMLAVVIFFGSAAFM) threads the bilayer. Residues 259–271 (YLQPSSISSMDQG) lie on the Extracellular side of the membrane. The chain crosses the membrane as a helical span at residues 272 to 292 (KVSSVFYTIIVPMLNPLIYSL). Residues 293-311 (RNKDVHVSLKKMLQRRTLL) are Cytoplasmic-facing.

This sequence belongs to the G-protein coupled receptor 1 family.

Its subcellular location is the cell membrane. Odorant receptor. The polypeptide is Olfactory receptor 8G1 (OR8G1) (Homo sapiens (Human)).